A 111-amino-acid chain; its full sequence is MSNAPSNTPTGFNYKPGHTLYIRNFGTDMRARTLGQAFEKWGRIVRCDIPISSNPQAHRYAFVEFEEREKAELAHEKMRNAKIGNDIIFVEWAKSRERYHRDDKRRLSNYA.

In terms of domain architecture, RRM spans 18 to 95 (HTLYIRNFGT…DIIFVEWAKS (78 aa)).

Belongs to the splicing factor SR family.

The protein localises to the nucleus. Its function is as follows. Has a role in pre-mRNA splicing where it is involved in spliceosome assembly. The protein is Putative splicing factor C222.18 of Schizosaccharomyces pombe (strain 972 / ATCC 24843) (Fission yeast).